Reading from the N-terminus, the 293-residue chain is Pantothenate synthetase (293 aa).

30–37 (MGYLHKGH) is a binding site for ATP. His37 acts as the Proton donor in catalysis. Gln61 is a binding site for (R)-pantoate. A beta-alanine-binding site is contributed by Gln61. Residue 147–150 (GEKD) participates in ATP binding. Gln153 contributes to the (R)-pantoate binding site. Residues Val176 and 184-187 (CSSR) contribute to the ATP site.

This sequence belongs to the pantothenate synthetase family. In terms of assembly, homodimer.

Its subcellular location is the cytoplasm. It carries out the reaction (R)-pantoate + beta-alanine + ATP = (R)-pantothenate + AMP + diphosphate + H(+). The protein operates within cofactor biosynthesis; (R)-pantothenate biosynthesis; (R)-pantothenate from (R)-pantoate and beta-alanine: step 1/1. Functionally, catalyzes the condensation of pantoate with beta-alanine in an ATP-dependent reaction via a pantoyl-adenylate intermediate. The protein is Pantothenate synthetase of Brucella canis (strain ATCC 23365 / NCTC 10854 / RM-666).